Consider the following 308-residue polypeptide: Aspartate carbamoyltransferase catalytic subunit (308 aa).

Residues Arg57 and Thr58 each contribute to the carbamoyl phosphate site. Lys86 provides a ligand contact to L-aspartate. Carbamoyl phosphate is bound by residues Arg107, His135, and Gln138. L-aspartate is bound by residues Arg168 and Arg229. Carbamoyl phosphate is bound by residues Leu268 and Pro269.

Belongs to the aspartate/ornithine carbamoyltransferase superfamily. ATCase family. As to quaternary structure, heterooligomer of catalytic and regulatory chains.

The catalysed reaction is carbamoyl phosphate + L-aspartate = N-carbamoyl-L-aspartate + phosphate + H(+). The protein operates within pyrimidine metabolism; UMP biosynthesis via de novo pathway; (S)-dihydroorotate from bicarbonate: step 2/3. Its function is as follows. Catalyzes the condensation of carbamoyl phosphate and aspartate to form carbamoyl aspartate and inorganic phosphate, the committed step in the de novo pyrimidine nucleotide biosynthesis pathway. In Pyrococcus abyssi (strain GE5 / Orsay), this protein is Aspartate carbamoyltransferase catalytic subunit.